Reading from the N-terminus, the 594-residue chain is Keratin, type II cytoskeletal 2 oral (594 aa).

Residues 1-164 (MSRQACKKSF…DPQIGQVKAQ (164 aa)) are head. Arg85 and Arg104 each carry omega-N-methylarginine. Residues 165 to 200 (EREQIKTLNNKFASFIDKVRFLEQQNKVLETKWELL) form a coil 1A region. Positions 165–480 (EREQIKTLNN…KLLEGEECRL (316 aa)) constitute an IF rod domain. A linker 1 region spans residues 201 to 221 (QQQTIRSGSGPQNLEPFFESY). Residues 222-313 (ISCLRKQLDS…TLYDMELSQI (92 aa)) are coil 1B. Residues 314–337 (QSHVSDTSVVLSMDNNRCLDLDSI) are linker 12. The coil 2 stretch occupies residues 338 to 476 (IAEVKAQYED…ATYRKLLEGE (139 aa)). The interval 477-594 (ECRLSGEFQN…TTSSSQQRSK (118 aa)) is tail. The segment at 497 to 594 (TSTSSSGSFR…TTSSSQQRSK (98 aa)) is disordered. Positions 506–522 (RGTGGSNYGGDSSGRSG) are enriched in gly residues. Over residues 523–551 (GSSSSSSRGSSSRGSSGSRLGSGGSISVS) the composition is skewed to low complexity. An Omega-N-methylarginine modification is found at Arg541. The segment covering 552–564 (QQRMGFNSGGSQT) has biased composition (polar residues). Low complexity predominate over residues 565–594 (SVGSSYKSGRGGSSSVQFSQTTSSSQQRSK).

It belongs to the intermediate filament family. Heterotetramer of two type I and two type II keratins.

Functionally, probably contributes to terminal cornification. This Mus musculus (Mouse) protein is Keratin, type II cytoskeletal 2 oral.